The following is a 474-amino-acid chain: Serine/threonine-protein kinase VRK3 (474 aa).

A compositionally biased stretch (polar residues) spans 41 to 58; that stretch reads HVSSFQGSKRGLNSSFET. Residues 41–152 are disordered; it reads HVSSFQGSKR…SRVTTSLEAL (112 aa). The Nuclear localization signal signature appears at 49–64; the sequence is KRGLNSSFETSPKKVK. Residues serine 54, serine 55, serine 59, serine 82, serine 83, and serine 90 each carry the phosphoserine modification. Low complexity predominate over residues 88–101; the sequence is TLSSSERSKGSGSR. The span at 107–149 shows a compositional bias: polar residues; that stretch reads SSPQKTRKSPQVTRGSPQKTSCSPQKTRQSPQTLKRSRVTTSL. Serine 108 carries the post-translational modification Phosphoserine; by CDK5. Residues serine 115 and serine 122 each carry the phosphoserine modification. Residues 166 to 457 enclose the Protein kinase domain; that stretch reads WKLKSFQTRD…MLRNNLEALL (292 aa).

Belongs to the protein kinase superfamily. CK1 Ser/Thr protein kinase family. VRK subfamily. As to quaternary structure, interacts with DUSP3. Interacts with RAN. Interacts with HSP70/HSPA1A. In terms of processing, phosphorylated at Ser-108 by CDK5; leading to protection of the cell against H2O2-induced apoptosis. Ubiquitinated by RNF144A.

It localises to the nucleus. It is found in the cytoplasm. It catalyses the reaction L-seryl-[protein] + ATP = O-phospho-L-seryl-[protein] + ADP + H(+). In terms of biological role, plays a role in the regulation of the cell cycle by phosphorylating the nuclear envelope protein barrier-to-autointegration factor/BAF that is required for disassembly and reassembly, respectively, of the nuclear envelope during mitosis. Under normal physiological conditions, negatively regulates ERK activity along with VHR/DUSP3 phosphatase in the nucleus, causing timely and transient action of ERK. Stress conditions activate CDK5 which phosphorylates VRK3 to increase VHR phosphatase activity and suppress prolonged ERK activation that causes cell death. For example, upon glutamate induction, promotes nuclear localization of HSP70/HSPA1A to inhibit ERK activation via VHR/DUSP3 phosphatase. The polypeptide is Serine/threonine-protein kinase VRK3 (VRK3) (Homo sapiens (Human)).